Reading from the N-terminus, the 32-residue chain is Cytochrome b6-f complex subunit 7 (32 aa).

A helical transmembrane segment spans residues 9-27 (AVVFWVLIPVGLAGGALLL).

This sequence belongs to the PetM family. In terms of assembly, the 4 large subunits of the cytochrome b6-f complex are cytochrome b6, subunit IV (17 kDa polypeptide, PetD), cytochrome f and the Rieske protein, while the 4 small subunits are PetG, PetL, PetM and PetN. The complex functions as a dimer.

It localises to the cellular thylakoid membrane. Functionally, component of the cytochrome b6-f complex, which mediates electron transfer between photosystem II (PSII) and photosystem I (PSI), cyclic electron flow around PSI, and state transitions. The polypeptide is Cytochrome b6-f complex subunit 7 (Synechococcus sp. (strain CC9311)).